The chain runs to 435 residues: U-box domain-containing protein 36 (435 aa).

Residues 227-345 (EAEASKRKAR…LKGKREEEEA (119 aa)) are a coiled coil. The U-box domain occupies 352–426 (EPPQYFICPI…QEWLQLRELL (75 aa)).

The catalysed reaction is S-ubiquitinyl-[E2 ubiquitin-conjugating enzyme]-L-cysteine + [acceptor protein]-L-lysine = [E2 ubiquitin-conjugating enzyme]-L-cysteine + N(6)-ubiquitinyl-[acceptor protein]-L-lysine.. It functions in the pathway protein modification; protein ubiquitination. Its function is as follows. Functions as an E3 ubiquitin ligase. This chain is U-box domain-containing protein 36 (PUB36), found in Arabidopsis thaliana (Mouse-ear cress).